A 322-amino-acid chain; its full sequence is uncharacterized protein (322 aa).

Basic residues-rich tracts occupy residues 1–16 (MPGN…KSGT) and 43–61 (LRPH…RRPV). The tract at residues 1–69 (MPGNSRRRGA…PVKRADETET (69 aa)) is disordered. Positions 261, 281, and 290 each coordinate S-adenosyl-L-methionine.

It belongs to the class IV-like SAM-binding methyltransferase superfamily. RNA methyltransferase TrmH family.

This is an uncharacterized protein from Mycobacterium bovis (strain ATCC BAA-935 / AF2122/97).